The following is a 1032-amino-acid chain: FACT complex subunit ctc-2 (1032 aa).

The segment at 446 to 513 (DEEEAQPTPK…QKEGLAKYAE (68 aa)) is disordered. The span at 476–508 (LRSERNTTVDEDADKRRREHQKELAQKKQKEGL) shows a compositional bias: basic and acidic residues. Coiled coils occupy residues 485 to 506 (DEDA…KQKE), 624 to 658 (DRYA…EQDK), 785 to 805 (RRRR…IAEA), and 949 to 1010 (EVEE…RKAK). The interval 943-1032 (NDSDDDEVEE…ERAAPKKRRK (90 aa)) is disordered. Acidic residues-rich tracts occupy residues 944 to 979 (DSDD…DSEY) and 986 to 1004 (EASD…DWDE).

This sequence belongs to the peptidase M24 family. SPT16 subfamily. As to quaternary structure, forms a stable heterodimer with ctc-1/pob3. The dimer of ctc-1 and ctc-2 weakly associates with multiple molecules of nhp-1/nhp6 to form the FACT complex.

Its subcellular location is the nucleus. It localises to the chromosome. In terms of biological role, component of the FACT complex, a general chromatin factor that acts to reorganize nucleosomes. The FACT complex is involved in multiple processes that require DNA as a template such as mRNA elongation, DNA replication and DNA repair. During transcription elongation the FACT complex acts as a histone chaperone that both destabilizes and restores nucleosomal structure. It facilitates the passage of RNA polymerase II and transcription by promoting the dissociation of one histone H2A-H2B dimer from the nucleosome, then subsequently promotes the reestablishment of the nucleosome following the passage of RNA polymerase II. The protein is FACT complex subunit ctc-2 (ctc-2) of Neurospora crassa (strain ATCC 24698 / 74-OR23-1A / CBS 708.71 / DSM 1257 / FGSC 987).